A 180-amino-acid polypeptide reads, in one-letter code: Inner membrane-spanning protein YciB (180 aa).

The next 6 helical transmembrane spans lie at Leu4–Ile24, Gln25–Ile45, Leu52–Asp72, Ile76–Ile96, Ile118–Val138, and Phe150–Leu170.

It belongs to the YciB family.

It localises to the cell inner membrane. Its function is as follows. Plays a role in cell envelope biogenesis, maintenance of cell envelope integrity and membrane homeostasis. The polypeptide is Inner membrane-spanning protein YciB (Rickettsia bellii (strain RML369-C)).